The following is a 1071-amino-acid chain: Exportin-1 (1071 aa).

In terms of domain architecture, Importin N-terminal spans 46–112 (AQEVLTHLKE…KKYVVGLIIK (67 aa)). HEAT repeat units follow at residues 217–240 (QNAP…PLGY), 241–277 (IFET…VSVS), 354–472 (MLLV…YVDT), 515–553 (RFLV…QYPR), 560–597 (KFLK…KCRR), and 602–639 (VQVG…AVGY). The necessary for interaction with Ran and nuclear export complex formation stretch occupies residues 327 to 450 (CTFLKEHGQL…VREFMKDTDS (124 aa)). At Ser-391 the chain carries Phosphoserine. The necessary for interaction with RANBP3 stretch occupies residues 411 to 481 (TVLSKVRLLM…TEIIMTKKLQ (71 aa)). Lys-446 is subject to N6-acetyllysine. Phosphothreonine is present on Thr-448. Ser-450 is modified (phosphoserine). At Tyr-454 the chain carries Phosphotyrosine. Lys-693 carries the N6-acetyllysine modification. HEAT repeat units follow at residues 775-813 (NFVP…KLGG), 885-916 (TMRN…SFYQ), and 917-954 (TYFC…NLVE). Residues Ser-966 and Ser-1031 each carry the phosphoserine modification. The HEAT 10 repeat unit spans residues 1002–1039 (FSLNQDIPAFKEHLRDFLVQIKEFAGEDTSDLFLEERE).

Belongs to the exportin family. Found in a U snRNA export complex with PHAX/RNUXA, NCBP1/CBP80, NCBP2/CBP20, RAN, XPO1 and m7G-capped RNA. Component of a nuclear export receptor complex composed of KPNB1, RAN, SNUPN and XPO1. Found in a trimeric export complex with SNUPN, RAN and XPO1. Found in a nuclear export complex with RANBP3 and RAN. Found in a 60S ribosomal subunit export complex with NMD3, RAN, XPO1. Interacts with DDX3X, NMD3, NUP42, NUP88, NUP214, RANBP3 and TERT. Interacts with NEMF (via its N-terminus). Interacts with the monomeric form of BIRC5/survivin deacetylated at 'Lys-129'. Interacts with DTNBP1 and SERTAD2; the interactions translocate DTNBP1 and SERTAD2 out of the nucleus. Interacts with ATF2. Interacts with SLC35G1 and STIM1. Interacts with DCAF8. Interacts with CPEB3. Interacts with HAX1. Interacts with BOK; translocates to the cytoplasm. Interacts with HSP90AB1. Interacts with LRPPRC; interacts with LRPPRC alone and also when LRPPRC is in complex with EIF4E and with EIF4E sensitivity element (4ESE)-containing mRNAs to form an EIF4E-dependent mRNA export complex.

The protein localises to the cytoplasm. The protein resides in the nucleus. Its subcellular location is the nucleoplasm. It is found in the cajal body. It localises to the nucleolus. Mediates the nuclear export of cellular proteins (cargos) bearing a leucine-rich nuclear export signal (NES) and of RNAs. In the nucleus, in association with RANBP3, binds cooperatively to the NES on its target protein and to the GTPase Ran in its active GTP-bound form. Docking of this complex to the nuclear pore complex (NPC) is mediated through binding to nucleoporins. Upon transit of a nuclear export complex into the cytoplasm, disassembling of the complex and hydrolysis of Ran-GTP to Ran-GDP (induced by RANBP1 and RANGAP1, respectively) cause release of the cargo from the export receptor. The directionality of nuclear export is thought to be conferred by an asymmetric distribution of the GTP- and GDP-bound forms of Ran between the cytoplasm and nucleus. Involved in U3 snoRNA transport from Cajal bodies to nucleoli. Binds to late precursor U3 snoRNA bearing a TMG cap. The chain is Exportin-1 (Xpo1) from Rattus norvegicus (Rat).